A 209-amino-acid polypeptide reads, in one-letter code: Large ribosomal subunit protein bL9 (209 aa).

The disordered stretch occupies residues 169 to 209 (RDGASFTEDYDPNAEPGLATEAEEAVADADDNAETNSEESL). Positions 189–209 (EAEEAVADADDNAETNSEESL) are enriched in acidic residues.

This sequence belongs to the bacterial ribosomal protein bL9 family.

In terms of biological role, binds to the 23S rRNA. This chain is Large ribosomal subunit protein bL9, found in Zymomonas mobilis subsp. mobilis (strain ATCC 31821 / ZM4 / CP4).